We begin with the raw amino-acid sequence, 194 residues long: BCL2/adenovirus E1B 19 kDa protein-interacting protein 3 (194 aa).

The interval 1–102 is disordered; sequence MSQNGAPGMQ…SQSEEDDIER (102 aa). A compositionally biased stretch (basic and acidic residues) spans 42–55; it reads DMEKILLDAQHESG. Residues S54, S66, S86, S92, and S95 each carry the phosphoserine modification. Low complexity predominate over residues 56-69; the sequence is RSSSKSSHCDSPPR. Over residues 78–88 the composition is skewed to basic and acidic residues; that stretch reads RASETDTHSIG. The short motif at 100–125 is the BH3 element; it reads IERRKEVESILKKNSDWIWDWSSRPE. A helical membrane pass occupies residues 164–184; that stretch reads VFLPSLLLSHLLAIGLGIYIG.

It belongs to the NIP3 family. As to quaternary structure, homodimer. Binds to BCL2. Interacts with BNIP3L and ACAA2. Interacts (via BH3 domain) with SPATA18 (via coiled-coil domains). Interacts with BOK; promotes BOK oligomerization. Interacts with PPTC7; this interaction promotes BNIP3 degradation. (Microbial infection) Interacts with adenovirus E1B 19 kDa protein. In terms of assembly, (Microbial infection) Interacts with Epstein-Barr virus BHRF1.

It localises to the mitochondrion. The protein localises to the mitochondrion outer membrane. Its function is as follows. Apoptosis-inducing protein that can overcome BCL2 suppression. May play a role in repartitioning calcium between the two major intracellular calcium stores in association with BCL2. Involved in mitochondrial quality control via its interaction with SPATA18/MIEAP: in response to mitochondrial damage, participates in mitochondrial protein catabolic process (also named MALM) leading to the degradation of damaged proteins inside mitochondria. The physical interaction of SPATA18/MIEAP, BNIP3 and BNIP3L/NIX at the mitochondrial outer membrane regulates the opening of a pore in the mitochondrial double membrane in order to mediate the translocation of lysosomal proteins from the cytoplasm to the mitochondrial matrix. Plays an important role in the calprotectin (S100A8/A9)-induced cell death pathway. This is BCL2/adenovirus E1B 19 kDa protein-interacting protein 3 from Homo sapiens (Human).